Consider the following 474-residue polypeptide: ATP synthase subunit beta (474 aa).

Position 151–158 (151–158 (GGAGVGKT)) interacts with ATP.

This sequence belongs to the ATPase alpha/beta chains family. As to quaternary structure, F-type ATPases have 2 components, CF(1) - the catalytic core - and CF(0) - the membrane proton channel. CF(1) has five subunits: alpha(3), beta(3), gamma(1), delta(1), epsilon(1). CF(0) has three main subunits: a(1), b(2) and c(9-12). The alpha and beta chains form an alternating ring which encloses part of the gamma chain. CF(1) is attached to CF(0) by a central stalk formed by the gamma and epsilon chains, while a peripheral stalk is formed by the delta and b chains.

It is found in the cell inner membrane. The enzyme catalyses ATP + H2O + 4 H(+)(in) = ADP + phosphate + 5 H(+)(out). Produces ATP from ADP in the presence of a proton gradient across the membrane. The catalytic sites are hosted primarily by the beta subunits. This is ATP synthase subunit beta from Ruegeria sp. (strain TM1040) (Silicibacter sp.).